Consider the following 310-residue polypeptide: Methionyl-tRNA formyltransferase (310 aa).

Residue S110–P113 coordinates (6S)-5,6,7,8-tetrahydrofolate.

It belongs to the Fmt family.

It catalyses the reaction L-methionyl-tRNA(fMet) + (6R)-10-formyltetrahydrofolate = N-formyl-L-methionyl-tRNA(fMet) + (6S)-5,6,7,8-tetrahydrofolate + H(+). In terms of biological role, attaches a formyl group to the free amino group of methionyl-tRNA(fMet). The formyl group appears to play a dual role in the initiator identity of N-formylmethionyl-tRNA by promoting its recognition by IF2 and preventing the misappropriation of this tRNA by the elongation apparatus. This Halorhodospira halophila (strain DSM 244 / SL1) (Ectothiorhodospira halophila (strain DSM 244 / SL1)) protein is Methionyl-tRNA formyltransferase.